The sequence spans 249 residues: Probable transcriptional regulatory protein Tgr7_2237 (249 aa).

The protein belongs to the TACO1 family.

Its subcellular location is the cytoplasm. The polypeptide is Probable transcriptional regulatory protein Tgr7_2237 (Thioalkalivibrio sulfidiphilus (strain HL-EbGR7)).